Reading from the N-terminus, the 189-residue chain is UPF0301 protein CTLon_0458 (189 aa).

Belongs to the UPF0301 (AlgH) family.

This chain is UPF0301 protein CTLon_0458, found in Chlamydia trachomatis serovar L2b (strain UCH-1/proctitis).